The following is a 134-amino-acid chain: Small ribosomal subunit protein uS8c (134 aa).

Belongs to the universal ribosomal protein uS8 family. As to quaternary structure, part of the 30S ribosomal subunit.

It localises to the plastid. It is found in the chloroplast. In terms of biological role, one of the primary rRNA binding proteins, it binds directly to 16S rRNA central domain where it helps coordinate assembly of the platform of the 30S subunit. The protein is Small ribosomal subunit protein uS8c (rps8) of Populus alba (White poplar).